Here is a 608-residue protein sequence, read N- to C-terminus: UvrABC system protein C (608 aa).

Residues 16 to 94 form the GIY-YIG domain; it reads NRPGVYRMFD…IKEWRPPYNI (79 aa). Residues 204-239 enclose the UVR domain; that stretch reads NALADELNVGMEQAAMRLDFEKAAELRDQVAILRRV.

This sequence belongs to the UvrC family. Interacts with UvrB in an incision complex.

Its subcellular location is the cytoplasm. In terms of biological role, the UvrABC repair system catalyzes the recognition and processing of DNA lesions. UvrC both incises the 5' and 3' sides of the lesion. The N-terminal half is responsible for the 3' incision and the C-terminal half is responsible for the 5' incision. The protein is UvrABC system protein C of Pseudomonas aeruginosa (strain LESB58).